A 362-amino-acid polypeptide reads, in one-letter code: Phosphoserine aminotransferase (362 aa).

Arginine 43 serves as a coordination point for L-glutamate. Pyridoxal 5'-phosphate-binding positions include 77–78, tryptophan 103, threonine 153, aspartate 173, and glutamine 196; that span reads AT. Residue lysine 197 is modified to N6-(pyridoxal phosphate)lysine. 238–239 is a binding site for pyridoxal 5'-phosphate; sequence NT.

Belongs to the class-V pyridoxal-phosphate-dependent aminotransferase family. SerC subfamily. As to quaternary structure, homodimer. Pyridoxal 5'-phosphate is required as a cofactor.

The protein localises to the cytoplasm. The enzyme catalyses O-phospho-L-serine + 2-oxoglutarate = 3-phosphooxypyruvate + L-glutamate. It catalyses the reaction 4-(phosphooxy)-L-threonine + 2-oxoglutarate = (R)-3-hydroxy-2-oxo-4-phosphooxybutanoate + L-glutamate. The protein operates within amino-acid biosynthesis; L-serine biosynthesis; L-serine from 3-phospho-D-glycerate: step 2/3. It functions in the pathway cofactor biosynthesis; pyridoxine 5'-phosphate biosynthesis; pyridoxine 5'-phosphate from D-erythrose 4-phosphate: step 3/5. Catalyzes the reversible conversion of 3-phosphohydroxypyruvate to phosphoserine and of 3-hydroxy-2-oxo-4-phosphonooxybutanoate to phosphohydroxythreonine. The polypeptide is Phosphoserine aminotransferase (Acidithiobacillus ferrooxidans (strain ATCC 23270 / DSM 14882 / CIP 104768 / NCIMB 8455) (Ferrobacillus ferrooxidans (strain ATCC 23270))).